The primary structure comprises 246 residues: Putative outer membrane protein YiaT (246 aa).

The signal sequence occupies residues 1 to 21; sequence MLINRNIVALFALPFMASATA.

This sequence belongs to the MipA/OmpV family.

It localises to the cell outer membrane. This Escherichia coli (strain K12) protein is Putative outer membrane protein YiaT (yiaT).